Here is a 247-residue protein sequence, read N- to C-terminus: 4-hydroxy-tetrahydrodipicolinate reductase (247 aa).

NAD(+) is bound by residues 12 to 17 (GITGRM), 78 to 80 (GTT), and 102 to 105 (AANF). Residue H136 is the Proton donor/acceptor of the active site. H137 serves as a coordination point for (S)-2,3,4,5-tetrahydrodipicolinate. Catalysis depends on K140, which acts as the Proton donor. 146–147 (GT) is a binding site for (S)-2,3,4,5-tetrahydrodipicolinate.

Belongs to the DapB family.

It is found in the cytoplasm. It catalyses the reaction (S)-2,3,4,5-tetrahydrodipicolinate + NAD(+) + H2O = (2S,4S)-4-hydroxy-2,3,4,5-tetrahydrodipicolinate + NADH + H(+). It carries out the reaction (S)-2,3,4,5-tetrahydrodipicolinate + NADP(+) + H2O = (2S,4S)-4-hydroxy-2,3,4,5-tetrahydrodipicolinate + NADPH + H(+). It participates in amino-acid biosynthesis; L-lysine biosynthesis via DAP pathway; (S)-tetrahydrodipicolinate from L-aspartate: step 4/4. In terms of biological role, catalyzes the conversion of 4-hydroxy-tetrahydrodipicolinate (HTPA) to tetrahydrodipicolinate. The protein is 4-hydroxy-tetrahydrodipicolinate reductase of Acidiphilium cryptum (strain JF-5).